Here is a 287-residue protein sequence, read N- to C-terminus: Uroporphyrinogen-III C-methyltransferase (287 aa).

The span at Met1–Ala10 shows a compositional bias: polar residues. The interval Met1–Val24 is disordered. Residues Pro40, Gly116–Asp118, Thr146, and Met199 each bind S-adenosyl-L-methionine.

The protein belongs to the precorrin methyltransferase family.

It catalyses the reaction uroporphyrinogen III + 2 S-adenosyl-L-methionine = precorrin-2 + 2 S-adenosyl-L-homocysteine + H(+). Its pathway is porphyrin-containing compound metabolism; siroheme biosynthesis; precorrin-2 from uroporphyrinogen III: step 1/1. In terms of biological role, catalyzes the methylation of both C-2 and C-7 of uroporphyrinogen III leading to precorrin-1 and precorrin-2; their oxidative esterification gives respectively factor I octamethyl ester and sirohydrochlorin. Inactivation of uroporphyrinogen-III methyltransferase results in the loss of nitrite and nitric oxide reductase activities, but not of nitrous oxide reductase activity. Likely involved in heme D1 biosynthesis. The polypeptide is Uroporphyrinogen-III C-methyltransferase (nirE) (Paracoccus denitrificans (strain Pd 1222)).